The sequence spans 3718 residues: Laminin subunit alpha-5 (3718 aa).

A signal peptide spans 1–40 (MAKRGGQLCAGSAPGALGPRSPAPRPLLLLLAGLALVGEA). The Laminin N-terminal domain occupies 46-304 (DGFSLHPPYF…SIKDISIGGR (259 aa)). N-linked (GlcNAc...) asparagine glycans are attached at residues asparagine 100, asparagine 148, and asparagine 248. Intrachain disulfides connect cysteine 305–cysteine 314, cysteine 307–cysteine 327, cysteine 329–cysteine 338, cysteine 341–cysteine 361, cysteine 364–cysteine 373, cysteine 366–cysteine 398, cysteine 401–cysteine 410, cysteine 413–cysteine 431, cysteine 434–cysteine 445, cysteine 436–cysteine 452, cysteine 454–cysteine 463, and cysteine 466–cysteine 476. Laminin EGF-like domains are found at residues 305 to 363 (CVCH…ECQS), 364 to 433 (CNCH…VCRP), and 434 to 479 (CDCE…CYPL). Asparagine 383 is a glycosylation site (N-linked (GlcNAc...) asparagine). Asparagine 457 carries an N-linked (GlcNAc...) asparagine glycan. N-linked (GlcNAc...) asparagine glycosylation occurs at asparagine 485. 29 cysteine pairs are disulfide-bonded: cysteine 500/cysteine 512, cysteine 502/cysteine 521, cysteine 523/cysteine 532, cysteine 535/cysteine 544, cysteine 547/cysteine 559, cysteine 549/cysteine 566, cysteine 568/cysteine 577, cysteine 580/cysteine 590, cysteine 593/cysteine 605, cysteine 595/cysteine 611, cysteine 613/cysteine 622, cysteine 625/cysteine 635, cysteine 638/cysteine 650, cysteine 640/cysteine 656, cysteine 658/cysteine 667, cysteine 670/cysteine 680, cysteine 683/cysteine 695, cysteine 685/cysteine 702, cysteine 704/cysteine 713, cysteine 716/cysteine 731, cysteine 752/cysteine 761, cysteine 764/cysteine 779, cysteine 782/cysteine 796, cysteine 784/cysteine 802, cysteine 804/cysteine 813, cysteine 816/cysteine 831, cysteine 834/cysteine 846, cysteine 836/cysteine 853, and cysteine 855/cysteine 864. Laminin EGF-like domains follow at residues 500–546 (CDCN…SCHP), 547–592 (CQCS…LCQL), 593–637 (CGCS…DCHA), 638–682 (CACD…SCIP), 683–728 (CHCS…YCEA), 729–781 (GSCH…GCTR), and 782–833 (CSCD…GCRS). The Laminin EGF-like 11; truncated domain maps to 834–855 (CRCDVGGALGQGCEPKTGACRC). Residues 856–1442 (RPNTQGPTCS…SLFYNNGALP (587 aa)) are domain IV 1 (domain IV B). N-linked (GlcNAc...) asparagine glycans are attached at residues asparagine 905, asparagine 926, and asparagine 964. Residues 1253-1284 (LTQSQELSPGAPPEGPQPRPPTAVDPNAEPTL) form a disordered region. Positions 1262–1275 (GAPPEGPQPRPPTA) are enriched in pro residues. N-linked (GlcNAc...) asparagine glycosylation occurs at asparagine 1335. 16 cysteine pairs are disulfide-bonded: cysteine 1443-cysteine 1455, cysteine 1445-cysteine 1462, cysteine 1464-cysteine 1473, cysteine 1476-cysteine 1486, cysteine 1489-cysteine 1496, cysteine 1491-cysteine 1503, cysteine 1505-cysteine 1514, cysteine 1517-cysteine 1530, cysteine 1533-cysteine 1548, cysteine 1535-cysteine 1555, cysteine 1557-cysteine 1566, cysteine 1569-cysteine 1579, cysteine 1582-cysteine 1594, cysteine 1584-cysteine 1601, cysteine 1603-cysteine 1612, and cysteine 1615-cysteine 1630. Laminin EGF-like domains lie at 1443-1488 (CGCH…NCRP), 1489-1532 (CDCG…GCEE), 1533-1581 (CNCS…SCRP), and 1582-1632 (CDCH…GCTR). An N-linked (GlcNAc...) asparagine glycan is attached at asparagine 1534. Residues 1633-1642 (CFCFGATERC) form the Laminin EGF-like 16; first part domain. The region spanning 1646–1831 (NLARHEFVDM…RGPPASNVEL (186 aa)) is the Laminin IV type A domain. 2 short sequence motifs (cell attachment site) span residues 1723–1725 (RGD) and 1839–1841 (RGD). Residues 1832–1864 (CMCPANYRGDSCQECAPGYYRDTKGLFLGRCVP) enclose the Laminin EGF-like 16; second part domain. Cystine bridges form between cysteine 1865–cysteine 1874, cysteine 1867–cysteine 1881, cysteine 1884–cysteine 1893, cysteine 1896–cysteine 1912, cysteine 1915–cysteine 1930, cysteine 1917–cysteine 1939, cysteine 1941–cysteine 1950, cysteine 1953–cysteine 1968, cysteine 1971–cysteine 1986, cysteine 1973–cysteine 1993, cysteine 1996–cysteine 2005, cysteine 2008–cysteine 2022, cysteine 2025–cysteine 2035, cysteine 2027–cysteine 2042, cysteine 2044–cysteine 2053, cysteine 2056–cysteine 2069, cysteine 2072–cysteine 2083, cysteine 2074–cysteine 2090, cysteine 2092–cysteine 2101, cysteine 2104–cysteine 2116, cysteine 2119–cysteine 2126, cysteine 2121–cysteine 2133, cysteine 2135–cysteine 2144, and cysteine 2147–cysteine 2166. Laminin EGF-like domains are found at residues 1865–1914 (CQCH…PCVS), 1915–1970 (CPCP…SCQP), 1971–2024 (CDCS…NCTR), 2025–2071 (CDCS…GCRP), 2072–2118 (CACG…GCRR), and 2119–2168 (CQCP…HCEV). The N-linked (GlcNAc...) asparagine glycan is linked to asparagine 2021. Positions 2169–2735 (CDHCVVLLLD…AQARSAASKV (567 aa)) are domain II and I. 7 N-linked (GlcNAc...) asparagine glycosylation sites follow: asparagine 2198, asparagine 2211, asparagine 2365, asparagine 2395, asparagine 2425, asparagine 2503, and asparagine 2570. 2 coiled-coil regions span residues 2205-2257 (ARLH…SQAT) and 2330-2464 (TRDL…ASLD). Coiled-coil stretches lie at residues 2604 to 2621 (ARKNQLAAQIQEAQAMLA) and 2639 to 2705 (AEAL…LENR). Asparagine 2709 carries N-linked (GlcNAc...) asparagine glycosylation. Laminin G-like domains lie at 2736-2933 (KVSM…DKPC), 2947-3119 (GSYL…SFGC), 3128-3296 (TMTF…SVGC), 3337-3511 (AYQF…VTPC), and 3518-3689 (DGLF…MRGC). 2 disulfide bridges follow: cysteine 2903-cysteine 2933 and cysteine 3094-cysteine 3119. Asparagine 3111, asparagine 3213, asparagine 3261, and asparagine 3291 each carry an N-linked (GlcNAc...) asparagine glycan. Disulfide bonds link cysteine 3265–cysteine 3296 and cysteine 3488–cysteine 3511. 2 N-linked (GlcNAc...) asparagine glycosylation sites follow: asparagine 3623 and asparagine 3673. A disulfide bridge links cysteine 3661 with cysteine 3689.

Laminin is a complex glycoprotein, consisting of three different polypeptide chains (alpha, beta, gamma), which are bound to each other by disulfide bonds into a cross-shaped molecule comprising one long and three short arms with globules at each end. Alpha-5 is a subunit of laminin-10 (laminin-511), laminin-11 (laminin-521) and laminin-15 (laminin-523). In terms of tissue distribution, in adult, high levels in heart, lung, and kidney; lower in brain, muscle and testis; very low in liver, gut and skin.

Its subcellular location is the secreted. It is found in the extracellular space. The protein localises to the extracellular matrix. The protein resides in the basement membrane. In terms of biological role, binding to cells via a high affinity receptor, laminin is thought to mediate the attachment, migration and organization of cells into tissues during embryonic development by interacting with other extracellular matrix components. Alpha-5 may be the major laminin alpha chain of adult epithelial and/or endothelial basal laminae. Plays a role in the regulation of skeletogenesis, through a mechanism that involves integrin-mediated signaling and PTK2B/PYK2. The sequence is that of Laminin subunit alpha-5 (Lama5) from Mus musculus (Mouse).